Here is a 179-residue protein sequence, read N- to C-terminus: ATP synthase subunit b (179 aa).

The helical transmembrane segment at 27 to 47 threads the bilayer; the sequence is TAITFLVMLVVLGKFAWGPIV.

The protein belongs to the ATPase B chain family. In terms of assembly, F-type ATPases have 2 components, F(1) - the catalytic core - and F(0) - the membrane proton channel. F(1) has five subunits: alpha(3), beta(3), gamma(1), delta(1), epsilon(1). F(0) has three main subunits: a(1), b(2) and c(10-14). The alpha and beta chains form an alternating ring which encloses part of the gamma chain. F(1) is attached to F(0) by a central stalk formed by the gamma and epsilon chains, while a peripheral stalk is formed by the delta and b chains.

The protein resides in the cell inner membrane. In terms of biological role, f(1)F(0) ATP synthase produces ATP from ADP in the presence of a proton or sodium gradient. F-type ATPases consist of two structural domains, F(1) containing the extramembraneous catalytic core and F(0) containing the membrane proton channel, linked together by a central stalk and a peripheral stalk. During catalysis, ATP synthesis in the catalytic domain of F(1) is coupled via a rotary mechanism of the central stalk subunits to proton translocation. Its function is as follows. Component of the F(0) channel, it forms part of the peripheral stalk, linking F(1) to F(0). This is ATP synthase subunit b from Anaeromyxobacter sp. (strain K).